Consider the following 360-residue polypeptide: Abhydrolase domain-containing protein lid-1 (360 aa).

The 131-residue stretch at Ala73 to Tyr203 folds into the AB hydrolase-1 domain.

This sequence belongs to the peptidase S33 family. ABHD4/ABHD5 subfamily. As to quaternary structure, interacts with atgl-1.

Its subcellular location is the lipid droplet. Acts coordinately with atgl-1 within the lipolytic cascade to distribute stored energy to tissues during nutritional deprivation. In Caenorhabditis elegans, this protein is Abhydrolase domain-containing protein lid-1.